The primary structure comprises 375 residues: Lipid-A-disaccharide synthase (375 aa).

It belongs to the LpxB family.

The enzyme catalyses a lipid X + a UDP-2-N,3-O-bis[(3R)-3-hydroxyacyl]-alpha-D-glucosamine = a lipid A disaccharide + UDP + H(+). It participates in bacterial outer membrane biogenesis; LPS lipid A biosynthesis. Condensation of UDP-2,3-diacylglucosamine and 2,3-diacylglucosamine-1-phosphate to form lipid A disaccharide, a precursor of lipid A, a phosphorylated glycolipid that anchors the lipopolysaccharide to the outer membrane of the cell. The chain is Lipid-A-disaccharide synthase from Pseudomonas putida (strain ATCC 700007 / DSM 6899 / JCM 31910 / BCRC 17059 / LMG 24140 / F1).